A 275-amino-acid chain; its full sequence is Chemotaxis protein methyltransferase Cher2 (275 aa).

The 275-residue stretch at M1–K275 folds into the CheR-type methyltransferase domain. S-adenosyl-L-methionine is bound by residues N73, T75, R79, E116, D145, N201–L202, and R218–N219.

Monomer.

The enzyme catalyses L-glutamyl-[protein] + S-adenosyl-L-methionine = [protein]-L-glutamate 5-O-methyl ester + S-adenosyl-L-homocysteine. Methylation of the membrane-bound methyl-accepting chemotaxis proteins (MCP) to form gamma-glutamyl methyl ester residues in MCP. Methylates the McpS chemotaxis receptor. This Pseudomonas putida (strain ATCC 47054 / DSM 6125 / CFBP 8728 / NCIMB 11950 / KT2440) protein is Chemotaxis protein methyltransferase Cher2 (cheR2).